The sequence spans 281 residues: Pantothenate synthetase (281 aa).

Position 17-24 (Met-17–His-24) interacts with ATP. The active-site Proton donor is His-24. Gln-48 contacts (R)-pantoate. Position 48 (Gln-48) interacts with beta-alanine. Gly-134–Asp-137 contributes to the ATP binding site. Gln-140 lines the (R)-pantoate pocket. ATP-binding positions include Val-163 and Leu-176 to Arg-179.

The protein belongs to the pantothenate synthetase family. In terms of assembly, homodimer.

It is found in the cytoplasm. The catalysed reaction is (R)-pantoate + beta-alanine + ATP = (R)-pantothenate + AMP + diphosphate + H(+). It functions in the pathway cofactor biosynthesis; (R)-pantothenate biosynthesis; (R)-pantothenate from (R)-pantoate and beta-alanine: step 1/1. Functionally, catalyzes the condensation of pantoate with beta-alanine in an ATP-dependent reaction via a pantoyl-adenylate intermediate. In Deinococcus radiodurans (strain ATCC 13939 / DSM 20539 / JCM 16871 / CCUG 27074 / LMG 4051 / NBRC 15346 / NCIMB 9279 / VKM B-1422 / R1), this protein is Pantothenate synthetase.